Consider the following 913-residue polypeptide: MMANYFRSTFKFRKTTVSTLFVLTVLVISILTWFDANKYKSNLPDDKSSNSLLDAAWHDLQVITEKPHPYTSHFNDNVHDYLLQRVEQISKKSKFIEVSDDSANGVSKLFQHLDVFNDSSTETRLVYYESSNILVKVEGKSPQLPGLLLSAHFDSVPTGYGATDDGKGVVSLLALLQYYSENQPERTIVFNFNNNEEFGLLGATIFTYSEWFKLVSYVINLEGAGAGSKAALFRTSDTATALLYEKSVKDQPFGNSIYQQGFYSRFVSSETDYKIYELNGLRGWDIAFYKPRDMYHTGKDTVQHTSKAALWHMLNIAWQLSKYVVADQTTASQEILDDESNSSPAIYFDIISKWFFVVSARQLYVWNIVLLCVLPITLILLRIVCNKLGTWRMPTSALFTRIPFALFVSSFTIYFTKELLLQLNPTIWSRNFILPFLFCISEFLLINTLVLALFEYLWPIQDFKTLSLLELSAIAWLFLLKCTWDLSSSGFKATGVYPVTVFYLFISLASMFGLCSMCFGKRPNATNDYDNSEFMRPDTNDTHSIECPRQPEDSETTETSPLINTPSSSVQSSPIASSKSLPGAVQYLQRTLNYDWSAQYLLAVPINAFLIWESLFNLFDALSMTVQESNKATEAVFKFAIYGAIFLCSPLLPFTTKLNRFVVIILGVVTILAASFSLFAAPYTELAPLKLRFVQRIDISRETKQNVEIYGRAGANIQEVLSSLPSRPNVSCKDSGSGTELCVYEGMWPNFGIPMKVDVVKNTHNDKEHFEYEPYFADLRINVADNRLCLMKFNTTGKKHLKQVEFKVGNETTTHSYRTDEGIDSLLLHKLSWNVPYYDVQLKWIPQYTAEGSSDTLGVSIDCYWGEFDETIVNGQVVQKIPAYNELLQFLPETFIVSNRESGMVTIHKYLEL.

Over 1 to 15 (MMANYFRSTFKFRKT) the chain is Cytoplasmic. A helical membrane pass occupies residues 16-36 (TVSTLFVLTVLVISILTWFDA). Residues 37–364 (NKYKSNLPDD…FFVVSARQLY (328 aa)) lie on the Vacuolar side of the membrane. The N-linked (GlcNAc...) asparagine glycan is linked to Asn-117. The Zn(2+) site is built by His-152 and Asp-164. The active-site Proton acceptor is the Glu-196. Glu-197, Glu-222, and His-296 together coordinate Zn(2+). A helical transmembrane segment spans residues 365–385 (VWNIVLLCVLPITLILLRIVC). At 386 to 394 (NKLGTWRMP) the chain is on the cytoplasmic side. A helical membrane pass occupies residues 395–415 (TSALFTRIPFALFVSSFTIYF). Residues 416 to 431 (TKELLLQLNPTIWSRN) lie on the Vacuolar side of the membrane. A helical membrane pass occupies residues 432-452 (FILPFLFCISEFLLINTLVLA). Residues 453–465 (LFEYLWPIQDFKT) are Cytoplasmic-facing. A helical transmembrane segment spans residues 466–486 (LSLLELSAIAWLFLLKCTWDL). Topologically, residues 487–494 (SSSGFKAT) are vacuolar. The helical transmembrane segment at 495–515 (GVYPVTVFYLFISLASMFGLC) threads the bilayer. Residues 516–600 (SMCFGKRPNA…TLNYDWSAQY (85 aa)) are Cytoplasmic-facing. The span at 540-552 (NDTHSIECPRQPE) shows a compositional bias: basic and acidic residues. Residues 540-578 (NDTHSIECPRQPEDSETTETSPLINTPSSSVQSSPIASS) form a disordered region. A compositionally biased stretch (polar residues) spans 557–566 (TETSPLINTP). Residues 567 to 578 (SSSVQSSPIASS) are compositionally biased toward low complexity. Residues 601-621 (LLAVPINAFLIWESLFNLFDA) form a helical membrane-spanning segment. Over 622–634 (LSMTVQESNKATE) the chain is Vacuolar. The helical transmembrane segment at 635 to 655 (AVFKFAIYGAIFLCSPLLPFT) threads the bilayer. The Cytoplasmic portion of the chain corresponds to 656–660 (TKLNR). A helical membrane pass occupies residues 661-681 (FVVIILGVVTILAASFSLFAA). Residues 682–913 (PYTELAPLKL…MVTIHKYLEL (232 aa)) are Vacuolar-facing. Residues Asn-729, Asn-794, and Asn-810 are each glycosylated (N-linked (GlcNAc...) asparagine).

This sequence belongs to the peptidase M28 family. Zn(2+) is required as a cofactor.

Its subcellular location is the vacuole membrane. May be involved in vacuolar sorting and osmoregulation. The polypeptide is Vacuolar membrane protease (Kluyveromyces lactis (strain ATCC 8585 / CBS 2359 / DSM 70799 / NBRC 1267 / NRRL Y-1140 / WM37) (Yeast)).